The chain runs to 192 residues: uncharacterized protein (192 aa).

Positions 1 to 18 are cleaved as a signal peptide; it reads MNSKFILKYFILAFFLVS. Cysteine 19 carries the N-palmitoyl cysteine lipid modification. Cysteine 19 carries S-diacylglycerol cysteine lipidation.

It localises to the cell membrane. This is an uncharacterized protein from Borreliella burgdorferi (strain ATCC 35210 / DSM 4680 / CIP 102532 / B31) (Borrelia burgdorferi).